The primary structure comprises 167 residues: Signal peptidase complex catalytic subunit SEC11 (167 aa).

Residues 1–6 are Cytoplasmic-facing; sequence MNIRQQ. A helical; Signal-anchor for type II membrane protein transmembrane segment spans residues 7–24; the sequence is LTKFLGLFLTLASAFMFW. Over 25-167 the chain is Lumenal; it reads KGLSVVTNSH…LALSSLLGSE (143 aa). Catalysis depends on charge relay system residues Ser44, His83, and Asp109. The C-terminal short (CTS) helix stretch occupies residues 153 to 164; the sequence is ALMGMLALSSLL.

This sequence belongs to the peptidase S26B family. Component of the signal peptidase complex (SPC) composed of a catalytic subunit SEC11 and three accessory subunits SPC1, SPC2 and SPC3. The complex induces a local thinning of the ER membrane which is used to measure the length of the signal peptide (SP) h-region of protein substrates. This ensures the selectivity of the complex towards h-regions shorter than 18-20 amino acids. SPC associates with the translocon complex.

It localises to the endoplasmic reticulum membrane. The enzyme catalyses Cleavage of hydrophobic, N-terminal signal or leader sequences from secreted and periplasmic proteins.. In terms of biological role, catalytic component of the signal peptidase complex (SPC) which catalyzes the cleavage of N-terminal signal sequences from nascent proteins as they are translocated into the lumen of the endoplasmic reticulum. Specifically cleaves N-terminal signal peptides that contain a hydrophobic alpha-helix (h-region) shorter than 18-20 amino acids. This Eremothecium gossypii (strain ATCC 10895 / CBS 109.51 / FGSC 9923 / NRRL Y-1056) (Yeast) protein is Signal peptidase complex catalytic subunit SEC11 (SEC11).